Consider the following 314-residue polypeptide: MAPSSRSPSPRTKRLRRARGEKEIGRSREREDDGREREKRNSRERDRDIGRDRDRERKGEGERDREVGDKRRRSGREDTEKRRRTRTDDERYSRGRHERSTSPSDRSHRSSRRSPERAIASRHDEGSNARGGSEEPNVEEDSVARMRAVEEALAAKKKEEPSFELSGKLAEETNRYRGITLLFNEPPEARKPSERWRLYVFKDGEPLNEPLCLHRQSCYLFGRERRIADIPTDHPSCSKQHAVIQYREMEKEKPDGMMGKQVKPYIMDLGSTNKTYINESPIEPQRYYELFEKDTIKFGNSSREYVLLHENSAE.

Low complexity predominate over residues 1–10 (MAPSSRSPSP). Residues 1–146 (MAPSSRSPSP…NVEEDSVARM (146 aa)) form a disordered region. The segment covering 18 to 127 (ARGEKEIGRS…AIASRHDEGS (110 aa)) has biased composition (basic and acidic residues). Residue serine 133 is modified to Phosphoserine. The region spanning 219–282 (YLFGRERRIA…NKTYINESPI (64 aa)) is the FHA domain.

As to quaternary structure, interacts with DCL1 (via N-terminus). In terms of tissue distribution, expressed in roots, lateral roots, vascular strands of roots and leaves, vegetative meristems, pollen and developing seeds.

The protein resides in the nucleus. Functionally, involved in the microRNA (miRNA) and short interfering RNA (siRNA) biogenesis. May facilitate DCL1 to access or recognize primary miRNAs. Binds RNA non-specifically. The sequence is that of FHA domain-containing protein DDL (DDL) from Arabidopsis thaliana (Mouse-ear cress).